The following is a 226-amino-acid chain: Ribonuclease 3 (226 aa).

An RNase III domain is found at 6–128 (INRLQRKLGY…LIGGVFLDSD (123 aa)). Glu41 serves as a coordination point for Mg(2+). Asp45 is an active-site residue. Mg(2+)-binding residues include Asp114 and Glu117. Residue Glu117 is part of the active site. The DRBM domain occupies 155-225 (DPKTRLQEYL…AEQALKKLEL (71 aa)).

Belongs to the ribonuclease III family. Homodimer. Requires Mg(2+) as cofactor.

It localises to the cytoplasm. It carries out the reaction Endonucleolytic cleavage to 5'-phosphomonoester.. In terms of biological role, digests double-stranded RNA. Involved in the processing of primary rRNA transcript to yield the immediate precursors to the large and small rRNAs (23S and 16S). Processes some mRNAs, and tRNAs when they are encoded in the rRNA operon. Processes pre-crRNA and tracrRNA of type II CRISPR loci if present in the organism. This is Ribonuclease 3 from Klebsiella pneumoniae (strain 342).